The chain runs to 155 residues: MGTRGPIGKRDEERVRRNTPENPTETISMIGTVEIPELGDMSYMGETHPLIEEMYDAIKQSAAVKFYEPTDWQFARLALYTLNQELIAAKHQGKPIGAMKLTAINQMLSALLLTEGDRRRVRLEIERAPADPTGGKVVDVTDVLKQRLAKASGGG.

The segment at 1 to 24 (MGTRGPIGKRDEERVRRNTPENPT) is disordered. The span at 8-19 (GKRDEERVRRNT) shows a compositional bias: basic and acidic residues.

The sequence is that of Gene 5 protein (5) from Mycobacterium (Mycobacteriophage D29).